The primary structure comprises 428 residues: Serine--tRNA ligase (428 aa).

235 to 237 (TAE) lines the L-serine pocket. 266–268 (RSE) serves as a coordination point for ATP. Glu-289 is an L-serine binding site. 353 to 356 (EISS) is an ATP binding site. Ser-389 is a binding site for L-serine.

Belongs to the class-II aminoacyl-tRNA synthetase family. Type-1 seryl-tRNA synthetase subfamily. As to quaternary structure, homodimer. The tRNA molecule binds across the dimer.

It is found in the cytoplasm. The enzyme catalyses tRNA(Ser) + L-serine + ATP = L-seryl-tRNA(Ser) + AMP + diphosphate + H(+). It catalyses the reaction tRNA(Sec) + L-serine + ATP = L-seryl-tRNA(Sec) + AMP + diphosphate + H(+). It participates in aminoacyl-tRNA biosynthesis; selenocysteinyl-tRNA(Sec) biosynthesis; L-seryl-tRNA(Sec) from L-serine and tRNA(Sec): step 1/1. In terms of biological role, catalyzes the attachment of serine to tRNA(Ser). Is also able to aminoacylate tRNA(Sec) with serine, to form the misacylated tRNA L-seryl-tRNA(Sec), which will be further converted into selenocysteinyl-tRNA(Sec). This chain is Serine--tRNA ligase, found in Shewanella sediminis (strain HAW-EB3).